The chain runs to 201 residues: Putative manganese efflux pump MntP (201 aa).

6 consecutive transmembrane segments (helical) span residues 3 to 23 (LVSIILISIGLSMDAFAVSIT), 39 to 59 (IGLFFGGFQALMPLIGWSIGI), 65 to 85 (IAALDHWIALILLSIIGGKMI), 116 to 136 (LTLLAIATSIDALAIGVSFAF), 141 to 161 (IINTIIIIGSITFVICFIGVM), and 176 to 196 (ILGGIVLIFIGIKIFIEHTNI).

It belongs to the MntP (TC 9.B.29) family.

It is found in the cell membrane. Probably functions as a manganese efflux pump. In Clostridium botulinum (strain Loch Maree / Type A3), this protein is Putative manganese efflux pump MntP.